The following is a 201-amino-acid chain: Anthranilate synthase component 2 (201 aa).

The Glutamine amidotransferase type-1 domain maps to 1 to 199; the sequence is MLLMIDNYDS…LRQQGGVRGE (199 aa). 52–54 provides a ligand contact to L-glutamine; it reads GPC. Catalysis depends on Cys79, which acts as the Nucleophile; for GATase activity. L-glutamine-binding positions include Gln83 and 129–130; that span reads SL. Active-site for GATase activity residues include His173 and Glu175.

Heterotetramer consisting of two non-identical subunits: a beta subunit (TrpG) and a large alpha subunit (TrpE).

It carries out the reaction chorismate + L-glutamine = anthranilate + pyruvate + L-glutamate + H(+). The protein operates within amino-acid biosynthesis; L-tryptophan biosynthesis; L-tryptophan from chorismate: step 1/5. Part of a heterotetrameric complex that catalyzes the two-step biosynthesis of anthranilate, an intermediate in the biosynthesis of L-tryptophan. In the first step, the glutamine-binding beta subunit (TrpG) of anthranilate synthase (AS) provides the glutamine amidotransferase activity which generates ammonia as a substrate that, along with chorismate, is used in the second step, catalyzed by the large alpha subunit of AS (TrpE) to produce anthranilate. In the absence of TrpG, TrpE can synthesize anthranilate directly from chorismate and high concentrations of ammonia. This chain is Anthranilate synthase component 2, found in Pseudomonas aeruginosa (strain ATCC 15692 / DSM 22644 / CIP 104116 / JCM 14847 / LMG 12228 / 1C / PRS 101 / PAO1).